The primary structure comprises 61 residues: Large ribosomal subunit protein uL30 (61 aa).

Belongs to the universal ribosomal protein uL30 family. Part of the 50S ribosomal subunit.

This is Large ribosomal subunit protein uL30 from Shewanella halifaxensis (strain HAW-EB4).